A 100-amino-acid polypeptide reads, in one-letter code: NADH-quinone oxidoreductase subunit K 2 (100 aa).

3 helical membrane-spanning segments follow: residues 4–24 (LWWHISLGVALFVIGAAGVLL), 28–48 (ILVVLMSLELLLNSVNINFIA), and 60–80 (IFAIFVIAITAAEVAVALGIL).

This sequence belongs to the complex I subunit 4L family. NDH-1 is composed of 14 different subunits. Subunits NuoA, H, J, K, L, M, N constitute the membrane sector of the complex.

It localises to the cell inner membrane. The enzyme catalyses a quinone + NADH + 5 H(+)(in) = a quinol + NAD(+) + 4 H(+)(out). Functionally, NDH-1 shuttles electrons from NADH, via FMN and iron-sulfur (Fe-S) centers, to quinones in the respiratory chain. The immediate electron acceptor for the enzyme in this species is believed to be ubiquinone. Couples the redox reaction to proton translocation (for every two electrons transferred, four hydrogen ions are translocated across the cytoplasmic membrane), and thus conserves the redox energy in a proton gradient. This is NADH-quinone oxidoreductase subunit K 2 from Sinorhizobium fredii (strain NBRC 101917 / NGR234).